A 383-amino-acid chain; its full sequence is ATP phosphoribosyltransferase regulatory subunit (383 aa).

The protein belongs to the class-II aminoacyl-tRNA synthetase family. HisZ subfamily. Heteromultimer composed of HisG and HisZ subunits.

It localises to the cytoplasm. The protein operates within amino-acid biosynthesis; L-histidine biosynthesis; L-histidine from 5-phospho-alpha-D-ribose 1-diphosphate: step 1/9. Functionally, required for the first step of histidine biosynthesis. May allow the feedback regulation of ATP phosphoribosyltransferase activity by histidine. This chain is ATP phosphoribosyltransferase regulatory subunit, found in Lactiplantibacillus plantarum (strain ATCC BAA-793 / NCIMB 8826 / WCFS1) (Lactobacillus plantarum).